The following is a 60-amino-acid chain: Large ribosomal subunit protein uL30 (60 aa).

It belongs to the universal ribosomal protein uL30 family. In terms of assembly, part of the 50S ribosomal subunit.

The sequence is that of Large ribosomal subunit protein uL30 from Albidiferax ferrireducens (strain ATCC BAA-621 / DSM 15236 / T118) (Rhodoferax ferrireducens).